Consider the following 360-residue polypeptide: Alkanal monooxygenase alpha chain (360 aa).

It belongs to the bacterial luciferase oxidoreductase family. In terms of assembly, heterodimer of an alpha and a beta chain.

It carries out the reaction a long-chain fatty aldehyde + FMNH2 + O2 = a long-chain fatty acid + hnu + FMN + H2O + 2 H(+). In terms of biological role, light-emitting reaction in luminous bacteria. The polypeptide is Alkanal monooxygenase alpha chain (luxA) (Photorhabdus luminescens (Xenorhabdus luminescens)).